The primary structure comprises 230 residues: Demethylmenaquinone methyltransferase (230 aa).

Residues threonine 62, aspartate 80, 100–101 (DG), and serine 117 contribute to the S-adenosyl-L-methionine site.

It belongs to the class I-like SAM-binding methyltransferase superfamily. MenG/UbiE family.

It carries out the reaction a 2-demethylmenaquinol + S-adenosyl-L-methionine = a menaquinol + S-adenosyl-L-homocysteine + H(+). It functions in the pathway quinol/quinone metabolism; menaquinone biosynthesis; menaquinol from 1,4-dihydroxy-2-naphthoate: step 2/2. Methyltransferase required for the conversion of demethylmenaquinol (DMKH2) to menaquinol (MKH2). This Corynebacterium glutamicum (strain R) protein is Demethylmenaquinone methyltransferase.